The following is a 120-amino-acid chain: NAD(P)H-quinone oxidoreductase subunit 3, chloroplastic (120 aa).

Helical transmembrane passes span 9 to 29, 64 to 84, and 88 to 108; these read IFWA…XISG, MFAL…PWAM, and VLGV…IVGL.

The protein belongs to the complex I subunit 3 family. As to quaternary structure, NDH is composed of at least 16 different subunits, 5 of which are encoded in the nucleus.

The protein localises to the plastid. It localises to the chloroplast thylakoid membrane. The catalysed reaction is a plastoquinone + NADH + (n+1) H(+)(in) = a plastoquinol + NAD(+) + n H(+)(out). The enzyme catalyses a plastoquinone + NADPH + (n+1) H(+)(in) = a plastoquinol + NADP(+) + n H(+)(out). In terms of biological role, NDH shuttles electrons from NAD(P)H:plastoquinone, via FMN and iron-sulfur (Fe-S) centers, to quinones in the photosynthetic chain and possibly in a chloroplast respiratory chain. The immediate electron acceptor for the enzyme in this species is believed to be plastoquinone. Couples the redox reaction to proton translocation, and thus conserves the redox energy in a proton gradient. The chain is NAD(P)H-quinone oxidoreductase subunit 3, chloroplastic from Eucalyptus globulus subsp. globulus (Tasmanian blue gum).